We begin with the raw amino-acid sequence, 1181 residues long: Pesticidal crystal protein Cry1Ae (1181 aa).

This sequence belongs to the delta endotoxin family.

In terms of biological role, promotes colloidosmotic lysis by binding to the midgut epithelial cells of many lepidopteran larvae. The polypeptide is Pesticidal crystal protein Cry1Ae (cry1Ae) (Bacillus thuringiensis subsp. alesti).